The sequence spans 89 residues: MAISQARKNEIINEYARHEGDTGSAEVQIAVLTAEINSLNEHLSVHKKDHHSYVGQMKKIGHRRNLLRYLRDNDIQRYRELIKSLGLRR.

This sequence belongs to the universal ribosomal protein uS15 family. As to quaternary structure, part of the 30S ribosomal subunit. Forms a bridge to the 50S subunit in the 70S ribosome, contacting the 23S rRNA.

Functionally, one of the primary rRNA binding proteins, it binds directly to 16S rRNA where it helps nucleate assembly of the platform of the 30S subunit by binding and bridging several RNA helices of the 16S rRNA. In terms of biological role, forms an intersubunit bridge (bridge B4) with the 23S rRNA of the 50S subunit in the ribosome. The sequence is that of Small ribosomal subunit protein uS15 from Latilactobacillus sakei subsp. sakei (strain 23K) (Lactobacillus sakei subsp. sakei).